The chain runs to 485 residues: Alpha-amylase (485 aa).

The first 18 residues, 1–18 (MFLTSVLILCSLAALSLG), serve as a signal peptide directing secretion. Glutamine 19 bears the Pyrrolidone carboxylic acid mark. Cysteine 46 and cysteine 102 are oxidised to a cystine. Asparagine 116, arginine 164, and aspartate 173 together coordinate Ca(2+). Cysteine 152 and cysteine 166 are oxidised to a cystine. Arginine 201 is a chloride binding site. The Nucleophile role is filled by aspartate 203. Histidine 207 is a binding site for Ca(2+). Catalysis depends on glutamate 240, which acts as the Proton donor. The chloride site is built by asparagine 303 and arginine 339. Cysteine 439 and cysteine 451 form a disulfide bridge. The N-linked (GlcNAc...) asparagine glycan is linked to asparagine 448.

This sequence belongs to the glycosyl hydrolase 13 family. Monomer. The cofactor is Ca(2+). It depends on chloride as a cofactor. As to expression, expressed in larval and adult gut.

The protein resides in the secreted. The catalysed reaction is Endohydrolysis of (1-&gt;4)-alpha-D-glucosidic linkages in polysaccharides containing three or more (1-&gt;4)-alpha-linked D-glucose units.. The polypeptide is Alpha-amylase (Phaedon cochleariae (Mustard beetle)).